The following is a 384-amino-acid chain: 8-amino-7-oxononanoate synthase (384 aa).

Arginine 21 provides a ligand contact to substrate. A pyridoxal 5'-phosphate-binding site is contributed by glycine 108–phenylalanine 109. Substrate is bound at residue histidine 133. Positions 179, 207, and 233 each coordinate pyridoxal 5'-phosphate. Lysine 236 carries the N6-(pyridoxal phosphate)lysine modification. Substrate is bound at residue threonine 352.

This sequence belongs to the class-II pyridoxal-phosphate-dependent aminotransferase family. BioF subfamily. In terms of assembly, homodimer. Pyridoxal 5'-phosphate serves as cofactor.

It carries out the reaction 6-carboxyhexanoyl-[ACP] + L-alanine + H(+) = (8S)-8-amino-7-oxononanoate + holo-[ACP] + CO2. Its pathway is cofactor biosynthesis; biotin biosynthesis. Its function is as follows. Catalyzes the decarboxylative condensation of pimeloyl-[acyl-carrier protein] and L-alanine to produce 8-amino-7-oxononanoate (AON), [acyl-carrier protein], and carbon dioxide. The polypeptide is 8-amino-7-oxononanoate synthase (Escherichia fergusonii (strain ATCC 35469 / DSM 13698 / CCUG 18766 / IAM 14443 / JCM 21226 / LMG 7866 / NBRC 102419 / NCTC 12128 / CDC 0568-73)).